The chain runs to 1116 residues: Protein STICHEL-like 1 (1116 aa).

2 disordered regions span residues 95 to 138 (RTSS…LEET) and 225 to 244 (KFLR…NSTP). Positions 115-124 (NDDDDDDDDV) are enriched in acidic residues. 2 short sequence motifs (PEST) span residues 257-282 (RNPS…FKGR) and 402-422 (KSQD…ESIQ). Residue 463–470 (GPRGTGKT) participates in ATP binding. 4 residues coordinate Zn(2+): C482, C492, C495, and C498. A coiled-coil region spans residues 726–760 (EAFLDRRNLTEADLERLKHALKLLSEAEKQLRVST). The tract at residues 777–798 (PSPGTTHTGSSRRQSSRATEES) is disordered. The segment covering 778–793 (SPGTTHTGSSRRQSSR) has biased composition (polar residues).

The protein belongs to the DnaX/STICHEL family.

This chain is Protein STICHEL-like 1, found in Arabidopsis thaliana (Mouse-ear cress).